Consider the following 275-residue polypeptide: Protein CIMAP1C (275 aa).

STPGR repeat units follow at residues 200–225 (PGPA…MAKR) and 236–261 (PGPG…MGIK).

Belongs to the CIMAP family.

This is Protein CIMAP1C (CIMAP1C) from Mus musculus (Mouse).